The sequence spans 313 residues: Porphobilinogen deaminase (313 aa).

An S-(dipyrrolylmethanemethyl)cysteine modification is found at C242.

It belongs to the HMBS family. As to quaternary structure, monomer. The cofactor is dipyrromethane.

It carries out the reaction 4 porphobilinogen + H2O = hydroxymethylbilane + 4 NH4(+). Its pathway is porphyrin-containing compound metabolism; protoporphyrin-IX biosynthesis; coproporphyrinogen-III from 5-aminolevulinate: step 2/4. In terms of biological role, tetrapolymerization of the monopyrrole PBG into the hydroxymethylbilane pre-uroporphyrinogen in several discrete steps. This chain is Porphobilinogen deaminase, found in Escherichia coli O6:H1 (strain CFT073 / ATCC 700928 / UPEC).